A 163-amino-acid chain; its full sequence is Nucleotide-binding protein MUL_0671 (163 aa).

It belongs to the YajQ family.

Its function is as follows. Nucleotide-binding protein. This chain is Nucleotide-binding protein MUL_0671, found in Mycobacterium ulcerans (strain Agy99).